The primary structure comprises 545 residues: MKCHYEVLGVKRDASDDDLKKAYRKLALKWHPDKNLDNAEDAAEQFKLIQAAYDVLSDPQERAWYDNHREALLKGGVSGEYQDDSIDLVQFFTVTCYSGYGDDEKGFYAVYRNVFESIVKEEKEHSKDEEDEEDEFPSFGESESDYDTVVHLFYGYWQSFCTRKNFAWKEEYDTRQASNRWEKRAMEKENKKTRDKARKEHNELVRQLVAFVRKRDKRVQAHKKLVEEQNAEKAKKVEELRRKQKLSQAKLAEDYQEQSWTAMSELEKELQQMEAEYGQEFGDASDSEENEEELESRDIANVDGVDAVMADGAAEMDDYYDDLYCPACDKSFKSDKAMKNHSKSKKHREMVALLRQQLEEEDESLSQNCAEREEDDEEEDDDDDDEQNDTSKQKLSKRQKKKKRLQKPVNNLPEAPETVSPVPQSTEEHLSPAPDSGNTEDTPVPSEDPDDGVKPDGQENTNQKSTAKTKGKKGGKDSKKSSKAHGGVEAAPEKEVNLRCVTCQYEFTTRNKLFDHLKSTGHATALSSSNTSQTSKKKKDSRKNR.

Positions 3 to 69 constitute a J domain; that stretch reads CHYEVLGVKR…QERAWYDNHR (67 aa). 4 disordered regions span residues 122 to 141, 276 to 302, 331 to 497, and 522 to 545; these read EKEHSKDEEDEEDEFPSFGE, EYGQEFGDASDSEENEEELESRDIANV, SFKS…KEVN, and HATALSSSNTSQTSKKKKDSRKNR. 2 stretches are compositionally biased toward acidic residues: residues 129 to 141 and 283 to 295; these read EEDEEDEFPSFGE and DASDSEENEEELE. Residues 180–286 adopt a coiled-coil conformation; sequence RWEKRAMEKE…YGQEFGDASD (107 aa). The C2H2-type 1 zinc-finger motif lies at 323-347; it reads LYCPACDKSFKSDKAMKNHSKSKKH. Positions 339–348 are enriched in basic residues; it reads KNHSKSKKHR. Residues 372-388 are compositionally biased toward acidic residues; that stretch reads REEDDEEEDDDDDDEQN. Basic residues predominate over residues 394-406; sequence KLSKRQKKKKRLQ. The segment at 498–522 adopts a C2H2-type 2 zinc-finger fold; it reads LRCVTCQYEFTTRNKLFDHLKSTGH. The segment covering 535 to 545 has biased composition (basic residues); the sequence is SKKKKDSRKNR.

Its function is as follows. May act as a co-chaperone for HSP70. The sequence is that of DnaJ homolog subfamily C member 21 (dnajc21) from Danio rerio (Zebrafish).